Reading from the N-terminus, the 438-residue chain is Glutamyl-tRNA reductase (438 aa).

Substrate contacts are provided by residues 49–52 (TCNR), Ser-109, 114–116 (EQQ), and Gln-120. Residue Cys-50 is the Nucleophile of the active site. 191–196 (GAGAMA) lines the NADP(+) pocket.

The protein belongs to the glutamyl-tRNA reductase family. As to quaternary structure, homodimer.

The catalysed reaction is (S)-4-amino-5-oxopentanoate + tRNA(Glu) + NADP(+) = L-glutamyl-tRNA(Glu) + NADPH + H(+). The protein operates within porphyrin-containing compound metabolism; protoporphyrin-IX biosynthesis; 5-aminolevulinate from L-glutamyl-tRNA(Glu): step 1/2. Catalyzes the NADPH-dependent reduction of glutamyl-tRNA(Glu) to glutamate 1-semialdehyde (GSA). In Corynebacterium diphtheriae (strain ATCC 700971 / NCTC 13129 / Biotype gravis), this protein is Glutamyl-tRNA reductase.